Reading from the N-terminus, the 405-residue chain is Farnesyl pyrophosphate synthase (405 aa).

Positions 158 and 162 each coordinate Mg(2+). The DDXXD motif motif lies at 158-162; it reads DDLAD.

Belongs to the FPP/GGPP synthase family. Mg(2+) is required as a cofactor.

It catalyses the reaction isopentenyl diphosphate + (2E)-geranyl diphosphate = (2E,6E)-farnesyl diphosphate + diphosphate. The protein operates within pheromone biosynthesis. In terms of biological role, farnesyl pyrophosphate synthase involved in murgantiol biosynthesis, a male-released aggregation pheromone, by catalyzing the formation of (2E,6E)-farnesyl diphosphate. This chain is Farnesyl pyrophosphate synthase, found in Murgantia histrionica (Harlequin bug).